We begin with the raw amino-acid sequence, 812 residues long: Valine--tRNA ligase (812 aa).

Residues 46-56 (PTVSGQLHIGH) carry the 'HIGH' region motif. The 'KMSKS' region signature appears at 536 to 540 (KMSKS). Lys539 is a binding site for ATP.

This sequence belongs to the class-I aminoacyl-tRNA synthetase family. ValS type 2 subfamily. In terms of assembly, monomer.

The protein resides in the cytoplasm. The catalysed reaction is tRNA(Val) + L-valine + ATP = L-valyl-tRNA(Val) + AMP + diphosphate. Catalyzes the attachment of valine to tRNA(Val). As ValRS can inadvertently accommodate and process structurally similar amino acids such as threonine, to avoid such errors, it has a 'posttransfer' editing activity that hydrolyzes mischarged Thr-tRNA(Val) in a tRNA-dependent manner. In Rickettsia rickettsii (strain Iowa), this protein is Valine--tRNA ligase.